We begin with the raw amino-acid sequence, 456 residues long: Bifunctional protein GlmU (456 aa).

The segment at 1 to 229 is pyrophosphorylase; sequence MYKSAVILAA…PDEIKGVNSR (229 aa). UDP-N-acetyl-alpha-D-glucosamine-binding positions include 8–11, K22, Q73, and 78–79; these read LAAG and GT. D103 lines the Mg(2+) pocket. Residues G140, E155, N170, and N227 each coordinate UDP-N-acetyl-alpha-D-glucosamine. N227 is a binding site for Mg(2+). Residues 230–250 form a linker region; that stretch reads GQLAEAEEILRLRINERHMEN. Residues 251-456 are N-acetyltransferase; it reads GVTLIDPKNT…GWVAKKGLKK (206 aa). Residues R332 and K350 each contribute to the UDP-N-acetyl-alpha-D-glucosamine site. The active-site Proton acceptor is the H362. Positions 365 and 376 each coordinate UDP-N-acetyl-alpha-D-glucosamine. Acetyl-CoA-binding positions include 385–386, A422, and R439; that span reads NY.

In the N-terminal section; belongs to the N-acetylglucosamine-1-phosphate uridyltransferase family. The protein in the C-terminal section; belongs to the transferase hexapeptide repeat family. In terms of assembly, homotrimer. The cofactor is Mg(2+).

It localises to the cytoplasm. It carries out the reaction alpha-D-glucosamine 1-phosphate + acetyl-CoA = N-acetyl-alpha-D-glucosamine 1-phosphate + CoA + H(+). The enzyme catalyses N-acetyl-alpha-D-glucosamine 1-phosphate + UTP + H(+) = UDP-N-acetyl-alpha-D-glucosamine + diphosphate. It functions in the pathway nucleotide-sugar biosynthesis; UDP-N-acetyl-alpha-D-glucosamine biosynthesis; N-acetyl-alpha-D-glucosamine 1-phosphate from alpha-D-glucosamine 6-phosphate (route II): step 2/2. It participates in nucleotide-sugar biosynthesis; UDP-N-acetyl-alpha-D-glucosamine biosynthesis; UDP-N-acetyl-alpha-D-glucosamine from N-acetyl-alpha-D-glucosamine 1-phosphate: step 1/1. Its pathway is bacterial outer membrane biogenesis; LPS lipid A biosynthesis. In terms of biological role, catalyzes the last two sequential reactions in the de novo biosynthetic pathway for UDP-N-acetylglucosamine (UDP-GlcNAc). The C-terminal domain catalyzes the transfer of acetyl group from acetyl coenzyme A to glucosamine-1-phosphate (GlcN-1-P) to produce N-acetylglucosamine-1-phosphate (GlcNAc-1-P), which is converted into UDP-GlcNAc by the transfer of uridine 5-monophosphate (from uridine 5-triphosphate), a reaction catalyzed by the N-terminal domain. The chain is Bifunctional protein GlmU from Clostridium novyi (strain NT).